The chain runs to 121 residues: Securin (121 aa).

Residues 1 to 24 (RATEKSVKTNGPLKQKQTTFSAKK) are disordered. 2 consecutive short sequence motifs (TEK-box) follow at residues 3 to 5 (TEK) and 26 to 28 (TEK). The disordered stretch occupies residues 93 to 121 (LGPPSPLNMPSPPWESDVLQSPSSILSTL). The short motif at 95-105 (PPSPLNMPSPP) is the SH3-binding element. The segment covering 95–105 (PPSPLNMPSPP) has biased composition (pro residues). Ser97 carries the post-translational modification Phosphoserine; by CDK1. A compositionally biased stretch (polar residues) spans 110 to 121 (VLQSPSSILSTL).

This sequence belongs to the securin family. Interacts with the caspase-like ESPL1, and prevents its protease activity probably by covering its active site. Interacts with p53/TP53 and blocks its activity probably by blocking its binding to DNA. Interacts with the Ku 70 kDa subunit of ds-DNA kinase. Interacts with PTTG1IP. Interacts with RPS10 and DNAJA1. Post-translationally, phosphorylated by CDK1 during mitosis. In terms of processing, phosphorylated in vitro by ds-DNA kinase. Ubiquitinated through 'Lys-11' linkage of ubiquitin moieties by the anaphase promoting complex (APC) at the onset of anaphase, conducting to its degradation. 'Lys-11'-linked ubiquitination is mediated by the E2 ligase UBE2C/UBCH10.

The protein resides in the cytoplasm. It is found in the nucleus. Regulatory protein, which plays a central role in chromosome stability, in the p53/TP53 pathway, and DNA repair. Probably acts by blocking the action of key proteins. During the mitosis, it blocks Separase/ESPL1 function, preventing the proteolysis of the cohesin complex and the subsequent segregation of the chromosomes. At the onset of anaphase, it is ubiquitinated, conducting to its destruction and to the liberation of ESPL1. Its function is however not limited to a blocking activity, since it is required to activate ESPL1. Negatively regulates the transcriptional activity and related apoptosis activity of p53/TP53. The negative regulation of p53/TP53 may explain the strong transforming capability of the protein when it is overexpressed. May also play a role in DNA repair via its interaction with Ku, possibly by connecting DNA damage-response pathways with sister chromatid separation. This Sus scrofa (Pig) protein is Securin (PTTG1).